The sequence spans 183 residues: Der GTPase-activating protein YihI (183 aa).

A disordered region spans residues 1–101 (MSRSKKTRKG…KLTDEQKLLK (101 aa)). Basic and acidic residues-rich tracts occupy residues 22–46 (KKQD…RHNE) and 92–101 (KLTDEQKLLK).

The protein belongs to the YihI family. In terms of assembly, interacts with Der.

In terms of biological role, a GTPase-activating protein (GAP) that modifies Der/EngA GTPase function. May play a role in ribosome biogenesis. The sequence is that of Der GTPase-activating protein YihI from Shewanella oneidensis (strain ATCC 700550 / JCM 31522 / CIP 106686 / LMG 19005 / NCIMB 14063 / MR-1).